We begin with the raw amino-acid sequence, 157 residues long: Deoxyuridine 5'-triphosphate nucleotidohydrolase (157 aa).

Substrate contacts are provided by residues 73–75, N86, and 90–92; these read RSG and TID.

Belongs to the dUTPase family. Mg(2+) serves as cofactor.

It catalyses the reaction dUTP + H2O = dUMP + diphosphate + H(+). Its pathway is pyrimidine metabolism; dUMP biosynthesis; dUMP from dCTP (dUTP route): step 2/2. Functionally, this enzyme is involved in nucleotide metabolism: it produces dUMP, the immediate precursor of thymidine nucleotides and it decreases the intracellular concentration of dUTP so that uracil cannot be incorporated into DNA. The sequence is that of Deoxyuridine 5'-triphosphate nucleotidohydrolase from Azorhizobium caulinodans (strain ATCC 43989 / DSM 5975 / JCM 20966 / LMG 6465 / NBRC 14845 / NCIMB 13405 / ORS 571).